Consider the following 237-residue polypeptide: Regulator of G-protein signaling 9-binding protein (237 aa).

Residues Met1 to Lys214 are Cytoplasmic-facing. Coiled-coil stretches lie at residues Gly29–Leu58 and Val144–Asn169. The SNARE-like stretch occupies residues Glu153–Glu202. Residues Ala215–Ala234 traverse the membrane as a helical; Anchor for type IV membrane protein segment. Over Lys235–Ser237 the chain is Extracellular.

It belongs to the RGS7BP/RGS9BP family. Specifically interacts with isoform RGS9-1 of RGS9. Component of the RGS9-1-Gbeta5 complex composed of RGS9-1, Gbeta5 (GNB5) and RGS9BP. Specifically expressed in the retina. Only present in photoreceptors (at protein level).

It is found in the membrane. Regulator of G protein-coupled receptor (GPCR) signaling in phototransduction. Participates in the recovery phase of visual transduction via its interaction with RGS9-1 isoform. Acts as a membrane-anchor that mediates the targeting of RGS9-1 to the photoreceptor outer segment, where phototransduction takes place. Enhances the ability of RGS9-1 to stimulate G protein GTPase activity, allowing the visual signal to be terminated on the physiologically time scale. It also controls the proteolytic stability of RGS9-1, probably by protecting it from degradation. The protein is Regulator of G-protein signaling 9-binding protein (RGS9BP) of Bos taurus (Bovine).